We begin with the raw amino-acid sequence, 368 residues long: BTB/POZ and TAZ domain-containing protein 5 (368 aa).

Positions 1 to 25 (MENMDDFSPENVLAPPPPPPPMKKS) are disordered. The 69-residue stretch at 55–123 (ADVLIHTDDN…LYSSCYEKQD (69 aa)) folds into the BTB domain. Residues 233-324 (QTYTQLYEAM…SEQCKVPLCS (92 aa)) form a TAZ-type zinc finger. The interval 335-358 (RKDEKRWKLLVRNVLSTKRIGGSP) is caM-binding.

As to quaternary structure, interacts with CUL3A. In terms of tissue distribution, preferentially expressed in young leaves, roots and stems.

It is found in the cytoplasm. Its pathway is protein modification; protein ubiquitination. Its function is as follows. May act as a substrate-specific adapter of an E3 ubiquitin-protein ligase complex (CUL3-RBX1-BTB) which mediates the ubiquitination and subsequent proteasomal degradation of target proteins. The sequence is that of BTB/POZ and TAZ domain-containing protein 5 (BT5) from Arabidopsis thaliana (Mouse-ear cress).